Here is a 391-residue protein sequence, read N- to C-terminus: Testis-expressed protein 9 (391 aa).

2 disordered regions span residues 1 to 31 (MAGR…PGPD) and 65 to 85 (QEVR…EDDY). The stretch at 188-351 (IGTEAQIRFL…EKQKGELMIG (164 aa)) forms a coiled coil.

Its subcellular location is the cytoplasm. It localises to the cytoskeleton. It is found in the microtubule organizing center. The protein resides in the centrosome. The protein localises to the centriolar satellite. The protein is Testis-expressed protein 9 (TEX9) of Homo sapiens (Human).